The sequence spans 632 residues: Mitoguardin 1 (632 aa).

Residues 70–90 (PVAKKLFVVTAVSAISVIFLA) traverse the membrane as a helical segment. Phosphoserine is present on residues serine 289 and serine 293.

It belongs to the mitoguardin family. As to quaternary structure, homodimer and heterodimer; forms heterodimers with MIGA2. Interacts with PLD6/MitoPLD.

The protein localises to the mitochondrion outer membrane. Regulator of mitochondrial fusion: acts by forming homo- and heterodimers at the mitochondrial outer membrane and facilitating the formation of PLD6/MitoPLD dimers. May act by regulating phospholipid metabolism via PLD6/MitoPLD. The chain is Mitoguardin 1 from Homo sapiens (Human).